We begin with the raw amino-acid sequence, 156 residues long: Endoribonuclease YbeY (156 aa).

Zn(2+) is bound by residues H122, H126, and H132.

It belongs to the endoribonuclease YbeY family. Zn(2+) is required as a cofactor.

The protein localises to the cytoplasm. In terms of biological role, single strand-specific metallo-endoribonuclease involved in late-stage 70S ribosome quality control and in maturation of the 3' terminus of the 16S rRNA. This chain is Endoribonuclease YbeY, found in Syntrophomonas wolfei subsp. wolfei (strain DSM 2245B / Goettingen).